The primary structure comprises 331 residues: Holliday junction branch migration complex subunit RuvB (331 aa).

The interval 1 to 182 (MSNDTLHKYE…FGIPLHLEFY (182 aa)) is large ATPase domain (RuvB-L). Residues Leu21, Arg22, Gly63, Lys66, Thr67, Thr68, 129–131 (EDY), Arg172, Tyr182, and Arg219 each bind ATP. Residue Thr67 coordinates Mg(2+). The small ATPAse domain (RuvB-S) stretch occupies residues 183-254 (SVDELVLVIK…FANSALFRLG (72 aa)). The tract at residues 257 to 331 (GAGFDKMDLK…FEYLLSSKYI (75 aa)) is head domain (RuvB-H). Arg310 and Arg315 together coordinate DNA.

The protein belongs to the RuvB family. In terms of assembly, homohexamer. Forms an RuvA(8)-RuvB(12)-Holliday junction (HJ) complex. HJ DNA is sandwiched between 2 RuvA tetramers; dsDNA enters through RuvA and exits via RuvB. An RuvB hexamer assembles on each DNA strand where it exits the tetramer. Each RuvB hexamer is contacted by two RuvA subunits (via domain III) on 2 adjacent RuvB subunits; this complex drives branch migration. In the full resolvosome a probable DNA-RuvA(4)-RuvB(12)-RuvC(2) complex forms which resolves the HJ.

The protein resides in the cytoplasm. It catalyses the reaction ATP + H2O = ADP + phosphate + H(+). Functionally, the RuvA-RuvB-RuvC complex processes Holliday junction (HJ) DNA during genetic recombination and DNA repair, while the RuvA-RuvB complex plays an important role in the rescue of blocked DNA replication forks via replication fork reversal (RFR). RuvA specifically binds to HJ cruciform DNA, conferring on it an open structure. The RuvB hexamer acts as an ATP-dependent pump, pulling dsDNA into and through the RuvAB complex. RuvB forms 2 homohexamers on either side of HJ DNA bound by 1 or 2 RuvA tetramers; 4 subunits per hexamer contact DNA at a time. Coordinated motions by a converter formed by DNA-disengaged RuvB subunits stimulates ATP hydrolysis and nucleotide exchange. Immobilization of the converter enables RuvB to convert the ATP-contained energy into a lever motion, pulling 2 nucleotides of DNA out of the RuvA tetramer per ATP hydrolyzed, thus driving DNA branch migration. The RuvB motors rotate together with the DNA substrate, which together with the progressing nucleotide cycle form the mechanistic basis for DNA recombination by continuous HJ branch migration. Branch migration allows RuvC to scan DNA until it finds its consensus sequence, where it cleaves and resolves cruciform DNA. The protein is Holliday junction branch migration complex subunit RuvB of Anaplasma marginale (strain Florida).